The sequence spans 183 residues: Glutathione-regulated potassium-efflux system ancillary protein KefG (183 aa).

This sequence belongs to the NAD(P)H dehydrogenase (quinone) family. KefG subfamily. As to quaternary structure, interacts with KefB.

Its subcellular location is the cell inner membrane. It carries out the reaction a quinone + NADH + H(+) = a quinol + NAD(+). The catalysed reaction is a quinone + NADPH + H(+) = a quinol + NADP(+). In terms of biological role, regulatory subunit of a potassium efflux system that confers protection against electrophiles. Required for full activity of KefB. This chain is Glutathione-regulated potassium-efflux system ancillary protein KefG, found in Salmonella paratyphi B (strain ATCC BAA-1250 / SPB7).